Here is a 709-residue protein sequence, read N- to C-terminus: MVEAIVEFDYQAQHDDELTISVGEVITNIRKEDGGWWEGQINGRRGLFPDNFVREIKKDMKKDLLSNKAPEKPMHDVSSGNALLSSETILRTNKRGERRRRRCQVAFSYLPQNDDELELKVGDIIEVVGEVEEGWWEGVLNGKTGMFPSNFIKELSGESDELGISQDEQLSKSRPEGFLPASLLPFPAHGAKGKTTFEGTILYRAAPGKTEGHRRYYSLRETTGSESDGGDSSSTKSEGANGTMATAAIQPKKVKGVGFGDIFKDKPIKLRPRSIEVENDFLPVEKTIGKKLPPATSTPDPSKTEMDSRTKTKDYCKVIFPYEAQNDDELTIKEGDIVTLINKDCIDVGWWEGELNGRRGVFPDNFVKLLPSDFDKEGNRPKKPPPPSAPVVKQGAGTTERKHEIKKIPPERPETLPNRTEEKERPEREPKLDLQKPSVPAIPPKKPRPPKTNSLNRPGALPPRRPERPVGPLTHTRGDSPKIDLAGSALSGILDKDLSDRSNDIDLEGFDSVISSTEKLSHPTTSRPKATGRRPPSQSLTSSSLSSPDIFDSPSPEEDKEEHISLAHRGIDVSKKTSKTVTISQVSDNKTSLPPKPGTMAAASSGPASLSSVASSPMSSSLGTAGQRASSPSLFSTEGKPKMEPAVSSQAAIEELKMQVRELRTIIETMKDQQKREIKQLLSELDEEKKIRLRLQMEVNDIKKALQSK.

SH3 domains follow at residues 1–58 (MVEA…EIKK) and 98–157 (RRRR…ELSG). A phosphoserine mark is found at serine 156, serine 159, serine 227, and serine 274. The span at 221-239 (ETTGSESDGGDSSSTKSEG) shows a compositional bias: low complexity. The tract at residues 221 to 242 (ETTGSESDGGDSSSTKSEGANG) is disordered. Disordered regions lie at residues 289 to 309 (GKKLPPATSTPDPSKTEMDSR), 372 to 485 (SDFD…KIDL), and 511 to 650 (DSVI…VSSQ). The residue at position 298 (threonine 298) is a Phosphothreonine. In terms of domain architecture, SH3 3 spans 311 to 372 (KTKDYCKVIF…PDNFVKLLPS (62 aa)). Residues 399 to 434 (TERKHEIKKIPPERPETLPNRTEEKERPEREPKLDL) are compositionally biased toward basic and acidic residues. Position 480 is a phosphoserine (serine 480). Residues 513–528 (VISSTEKLSHPTTSRP) are compositionally biased toward polar residues. Low complexity predominate over residues 535-554 (PPSQSLTSSSLSSPDIFDSP). Phosphoserine is present on residues serine 553, serine 555, and serine 565. Residues 561-575 (EEHISLAHRGIDVSK) are compositionally biased toward basic and acidic residues. The span at 579-592 (KTVTISQVSDNKTS) shows a compositional bias: polar residues. Positions 600-623 (MAAASSGPASLSSVASSPMSSSLG) are enriched in low complexity. Residues 627–636 (QRASSPSLFS) are compositionally biased toward polar residues. Position 631 is a phosphoserine (serine 631). Residues 646-708 (AVSSQAAIEE…VNDIKKALQS (63 aa)) are a coiled coil.

Can self-associate and form homotetramers. Interacts with CD2, F-actin capping protein, PIK3R3, GRB2, EGFR, MET, BLNK, MAP3K4, PDCD6IP, SPRY2, ARHGAP17, ARHGAP27, CRK, BCAR1, SOS1, ASAP1, ARAP3, HIP1R, SYNJ2, INPP5D and STAP1. Interacts with E3 ubiquitin-protein ligase CBL. Interacts with CBLB, but does not interact with CBLC. Two molecules of SH3KBP1 seem to bind through their respective SH3 1 domain to one molecule of CBLB. The interaction with CBL or CBLB and EGFR is increased upon EGF stimulation. The interaction with CBL is attenuated by PDCD6IP. Interacts (via SH3 domains) with ARAP1. The interaction is independent of EGF and does not affect ARAP1 GTPase-activating activity but is involved in regulating ubiquitination and endocytic trafficking of EGFR. ARAP1 competes with CBL for binding to SH3KBP1 and prevents interaction of CBL with SH3KBP1; this is likely to regulate SH3KBP1-mediated internalization of EGFR. Interacts through its proline-rich region with the SH3 domain of endophilins SH3GL1, SH3GL2 and SH3GL3. The SH3KBP1-endophilin complex seems to associate with a complex containing the phosphorylated receptor (EGFR or MET) and phosphorylated CBL. Probably associates with ASAP1 and phosphorylated EGFR. Probably part of a complex consisting of at least SH3KBP1, ASAP1 and ARAP3. Interacts with focal adhesion kinases PTK2/FAK1 and PTK2B/PYK2, probably as a dimer. Interacts with DAB2 and probably associates with chathrin through its interaction with DAB2. Part of a complex consisting of SH3KBP1, DAB2, and clathrin heavy chain. DAB2 and clathrin dissociate from SH3KBP1 following growth factor treatment, enabling interaction with CBL. Interacts with DDN and probably associates with MAGI2 through its interaction with DDN. Interacts with the SH3 domains of SRC tyrosine-protein kinases SRC, LCK, LYN, FGR, FYN and HCK. Interacts with TRADD, BIRC2, TRAF1, TRAF2 and TNFR1, and the association with a TNFR1-associated complex upon stimulation with TNF-alpha seems to be mediated by SRC. Probably part of a complex consisting of at least SH3KBP1, ASAP1 and ARAP3. Interacts (via SH3 domains) with SHKBP1 (via PXXXPR motifs). Interacts with ATX2. Interaction with CBL is abolished in the presence of SHKBP1. Interacts (via SH3 domains) with ZFP36 (via extreme C-terminal region). Interacts with MAP3K4; this interaction enhances the association with ZFP36. Monoubiquitinated by CBL and CBLB after EGF stimulation; probably on its C-terminus.

It localises to the cytoplasm. The protein resides in the cytoskeleton. The protein localises to the cytoplasmic vesicle membrane. Its subcellular location is the synapse. It is found in the synaptosome. It localises to the cell junction. The protein resides in the focal adhesion. In terms of biological role, adapter protein involved in regulating diverse signal transduction pathways. Involved in the regulation of endocytosis and lysosomal degradation of ligand-induced receptor tyrosine kinases, including EGFR and MET/hepatocyte growth factor receptor, through an association with CBL and endophilins. The association with CBL, and thus the receptor internalization, may be inhibited by an interaction with PDCD6IP and/or SPRY2. Involved in regulation of ligand-dependent endocytosis of the IgE receptor. Attenuates phosphatidylinositol 3-kinase activity by interaction with its regulatory subunit. May be involved in regulation of cell adhesion; promotes the interaction between TTK2B and PDCD6IP. May be involved in the regulation of cellular stress response via the MAPK pathways through its interaction with MAP3K4. Is involved in modulation of tumor necrosis factor mediated apoptosis. Plays a role in the regulation of cell morphology and cytoskeletal organization. Required in the control of cell shape and migration. Has an essential role in the stimulation of B cell activation. The chain is SH3 domain-containing kinase-binding protein 1 (Sh3kbp1) from Mus musculus (Mouse).